Here is a 242-residue protein sequence, read N- to C-terminus: Protein odd-skipped-related 1 (242 aa).

3 C2H2-type zinc fingers span residues 128–150, 156–178, and 184–207; these read FICK…ERTH, FHCE…KYIH, and HKCE…SCHH.

The protein belongs to the Odd C2H2-type zinc-finger protein family.

It is found in the nucleus. May function as transcription regulator. Essential for larval development. Required for morphogenesis and function of the digestive tract. This Caenorhabditis elegans protein is Protein odd-skipped-related 1.